The chain runs to 314 residues: GTPase-interacting component 1 (314 aa).

Disordered regions lie at residues 112 to 156, 199 to 221, and 241 to 261; these read SRRH…KHDV, TMDS…QLDS, and LGDS…SFSG. One can recognise a CRIB domain in the interval 126-139; sequence ISTPFDFHHISHAN. Residues 140 to 156 are compositionally biased toward basic and acidic residues; that stretch reads GKREDNPLESHEEKHDV. The segment covering 208-221 has biased composition (polar residues); it reads ETNNTPNGNKQLDS. A compositionally biased stretch (low complexity) spans 251–260; it reads PSSPSVSSFS.

It belongs to the BORG/CEP family. As to quaternary structure, interacts with GTP-bound CDC42.

It is found in the bud neck. Its subcellular location is the bud tip. It localises to the cytoplasm. The protein resides in the cell cortex. The protein localises to the cytoskeleton. Its function is as follows. Required for cell size and shape control, bud site selection, bud emergence, actin cytoskeletal organization, mitotic spindle orientation/positioning, and mating projection formation in response to mating pheromone. In Saccharomyces cerevisiae (strain ATCC 204508 / S288c) (Baker's yeast), this protein is GTPase-interacting component 1 (GIC1).